The primary structure comprises 460 residues: Argininosuccinate lyase (460 aa).

Belongs to the lyase 1 family. Argininosuccinate lyase subfamily.

Its subcellular location is the cytoplasm. The catalysed reaction is 2-(N(omega)-L-arginino)succinate = fumarate + L-arginine. Its pathway is amino-acid biosynthesis; L-arginine biosynthesis; L-arginine from L-ornithine and carbamoyl phosphate: step 3/3. The protein is Argininosuccinate lyase of Campylobacter jejuni (strain RM1221).